A 440-amino-acid chain; its full sequence is Putative postmeiotic segregation increased 2-like protein 1 (440 aa).

Residues 164-178 (RVEHNVESSRWEPRR) show a composition bias toward basic and acidic residues. The segment at 164–215 (RVEHNVESSRWEPRRRGACGSRGGNFPSPRGGSGVASLERAESSSTEPAKAI) is disordered. The Histidine kinase domain maps to 230 to 364 (PVVPSLSTAV…MTVSVKQLFS (135 aa)).

The protein belongs to the DNA mismatch repair MutL/HexB family. Highly expressed in kidney, spleen, adrenal gland, ovary and cerebellum and to a lower extent in liver, esophagus, stomach, duodenum, colon, bladder, uterus, lung, pancreas and cerebrum. Not expressed in heart.

This Homo sapiens (Human) protein is Putative postmeiotic segregation increased 2-like protein 1 (PMS2P1).